A 296-amino-acid chain; its full sequence is 4-hydroxybenzoate octaprenyltransferase (296 aa).

Helical transmembrane passes span 28–48 (PIGIYLLLWPTLVAVWIAGNG), 55–75 (VLIFALGVVLMRAAGCCINDF), 102–122 (AVMLFALLVGVSFLLVLCTNA), 145–167 (TYYPQVVLGAAYSWGIPMAFTAA), 174–196 (SAWLLYIANLLWTVGYDTYYAMV), 219–239 (VIILTLQLLSLGCLLLAGNRF), 241–261 (LGGWYHLGLLAAAACFAWEFW), and 275–295 (FLHNHWAGMLIFIGVVLDYAL).

This sequence belongs to the UbiA prenyltransferase family. Mg(2+) serves as cofactor.

It localises to the cell inner membrane. It catalyses the reaction all-trans-octaprenyl diphosphate + 4-hydroxybenzoate = 4-hydroxy-3-(all-trans-octaprenyl)benzoate + diphosphate. The protein operates within cofactor biosynthesis; ubiquinone biosynthesis. Catalyzes the prenylation of para-hydroxybenzoate (PHB) with an all-trans polyprenyl group. Mediates the second step in the final reaction sequence of ubiquinone-8 (UQ-8) biosynthesis, which is the condensation of the polyisoprenoid side chain with PHB, generating the first membrane-bound Q intermediate 3-octaprenyl-4-hydroxybenzoate. This chain is 4-hydroxybenzoate octaprenyltransferase, found in Pseudomonas entomophila (strain L48).